A 37-amino-acid polypeptide reads, in one-letter code: Large ribosomal subunit protein bL36 (37 aa).

This sequence belongs to the bacterial ribosomal protein bL36 family.

The chain is Large ribosomal subunit protein bL36 from Thioalkalivibrio sulfidiphilus (strain HL-EbGR7).